The sequence spans 216 residues: Superoxide dismutase [Cu-Zn], chloroplastic (216 aa).

A chloroplast-targeting transit peptide spans 1–62 (MACHSALAAV…ASPRSMVVVA (62 aa)). The Cu cation site is built by His-108, His-110, and His-125. A disulfide bridge links Cys-119 with Cys-208. Zn(2+) is bound by residues His-125, His-133, His-142, and Asp-145. His-182 is a binding site for Cu cation.

It belongs to the Cu-Zn superoxide dismutase family. Homotetramer. It depends on Cu cation as a cofactor. Requires Zn(2+) as cofactor.

The protein localises to the plastid. It localises to the chloroplast. It carries out the reaction 2 superoxide + 2 H(+) = H2O2 + O2. Destroys radicals which are normally produced within the cells and which are toxic to biological systems. The protein is Superoxide dismutase [Cu-Zn], chloroplastic (SODCP) of Zantedeschia aethiopica (White calla lily).